Consider the following 205-residue polypeptide: Pyridoxal 5'-phosphate synthase subunit PdxT (205 aa).

54-56 lines the L-glutamine pocket; sequence GES. Cysteine 86 (nucleophile) is an active-site residue. L-glutamine contacts are provided by residues arginine 118 and 147-148; that span reads IR. Active-site charge relay system residues include histidine 183 and glutamate 185.

The protein belongs to the glutaminase PdxT/SNO family. In the presence of PdxS, forms a dodecamer of heterodimers. Only shows activity in the heterodimer.

It carries out the reaction aldehydo-D-ribose 5-phosphate + D-glyceraldehyde 3-phosphate + L-glutamine = pyridoxal 5'-phosphate + L-glutamate + phosphate + 3 H2O + H(+). It catalyses the reaction L-glutamine + H2O = L-glutamate + NH4(+). It functions in the pathway cofactor biosynthesis; pyridoxal 5'-phosphate biosynthesis. Its function is as follows. Catalyzes the hydrolysis of glutamine to glutamate and ammonia as part of the biosynthesis of pyridoxal 5'-phosphate. The resulting ammonia molecule is channeled to the active site of PdxS. The protein is Pyridoxal 5'-phosphate synthase subunit PdxT of Nitrosopumilus maritimus (strain SCM1).